Reading from the N-terminus, the 57-residue chain is MIQSPTSFLIVLILLWCKLVLSCFREFIIALQQLIQVLLQIINSNLQSRLTLWHSLD.

The signal sequence occupies residues 1-23 (MIQSPTSFLIVLILLWCKLVLSC).

In terms of biological role, involved in resistance to IFN. The polypeptide is Non-structural protein 3a (Avian infectious bronchitis virus (strain Beaudette) (IBV)).